Reading from the N-terminus, the 117-residue chain is MPRVKTGTNRRRRHKKVLKLAKGYRGTKGNLFRIANQQVMKSLTYAYRDRKQRKREFRRLWISRINAACRQNGISYNKFINGLKKAGVEINRKMLADMAVNDEQAFGELVDLAKKSV.

This sequence belongs to the bacterial ribosomal protein bL20 family.

Its function is as follows. Binds directly to 23S ribosomal RNA and is necessary for the in vitro assembly process of the 50S ribosomal subunit. It is not involved in the protein synthesizing functions of that subunit. The polypeptide is Large ribosomal subunit protein bL20 (Natranaerobius thermophilus (strain ATCC BAA-1301 / DSM 18059 / JW/NM-WN-LF)).